Reading from the N-terminus, the 887-residue chain is Putative RNA-binding protein 15B (887 aa).

The tract at residues 1–132 (MKRQSERDSS…EPAGPGSTAA (132 aa)) is disordered. Over residues 10 to 20 (SPSGRGSSSSA) the composition is skewed to low complexity. 2 stretches are compositionally biased toward basic and acidic residues: residues 22-34 (RPREREREAEAGG) and 65-77 (GHRDGRAAGDANH). A compositionally biased stretch (gly residues) spans 83 to 94 (RSSGAPGGGGRT). The segment covering 95-110 (GKASGDPGAGGASPRA) has biased composition (low complexity). Residues Ser-107 and Ser-111 each carry the phosphoserine modification. Residues 111–122 (SPLPPPPPPPGA) are compositionally biased toward pro residues. The segment covering 123-132 (EPAGPGSTAA) has biased composition (low complexity). Residues 136-216 (KTLLISSLSP…RPLKVEPVYL (81 aa)) enclose the RRM 1 domain. Lys-210 is covalently cross-linked (Glycyl lysine isopeptide (Lys-Gly) (interchain with G-Cter in SUMO2)). A disordered region spans residues 215 to 249 (YLRGGGSSRRSSSSSAAASTPPPGPPAPADPLGYL). Positions 222–233 (SRRSSSSSAAAS) are enriched in low complexity. The segment covering 234-243 (TPPPGPPAPA) has biased composition (pro residues). Residues Ser-261 and Ser-263 each carry the phosphoserine modification. RRM domains follow at residues 333–410 (RNLF…YGKA) and 414–488 (TRLW…FAKA). The residue at position 529 (Thr-529) is a Phosphothreonine. 3 positions are modified to phosphoserine: Ser-549, Ser-553, and Ser-559. The interval 549–703 (SLSKSSDRRN…TLEEPKHETK (155 aa)) is disordered. Composition is skewed to basic and acidic residues over residues 570–613 (RSGE…ERSR), 623–643 (RGSDRTPERSRKENHSSEGTK), and 668–700 (EAPDSSHGKKTRESERNHRTTEAEPKTLEEPKH). The short motif at 590–594 (RRKRR) is the Nuclear localization signal element. Lys-699 is covalently cross-linked (Glycyl lysine isopeptide (Lys-Gly) (interchain with G-Cter in SUMO2)). The 179-residue stretch at 708-886 (LSEYAQTLQL…HMVIVIVRDT (179 aa)) folds into the SPOC domain. The segment at 719 to 887 (WNGLLVLKNS…MVIVIVRDTA (169 aa)) is interaction with Epstein-Barr virus BMLF1.

This sequence belongs to the RRM Spen family. As to quaternary structure, component of the WMM complex, a N6-methyltransferase complex composed of a catalytic subcomplex, named MAC, and of an associated subcomplex, named MACOM. The MAC subcomplex is composed of METTL3 and METTL14. The MACOM subcomplex is composed of WTAP, ZC3H13, CBLL1/HAKAI, VIRMA, and, in some cases of RBM15 (RBM15 or RBM15B). May interact with NCOR2. Interacts with NXF1, the interaction is required to promote mRNA export.

Its subcellular location is the nucleus. The protein localises to the nucleoplasm. The protein resides in the nucleus speckle. It localises to the nucleus envelope. Functionally, RNA-binding protein that acts as a key regulator of N6-methyladenosine (m6A) methylation of RNAs, thereby regulating different processes, such as alternative splicing of mRNAs and X chromosome inactivation mediated by Xist RNA. Associated component of the WMM complex, a complex that mediates N6-methyladenosine (m6A) methylation of RNAs, a modification that plays a role in the efficiency of mRNA splicing and RNA processing. Plays a key role in m6A methylation, possibly by binding target RNAs and recruiting the WMM complex. Involved in random X inactivation mediated by Xist RNA: acts by binding Xist RNA and recruiting the WMM complex, which mediates m6A methylation, leading to target YTHDC1 reader on Xist RNA and promoting transcription repression activity of Xist. Functions in the regulation of alternative or illicit splicing, possibly by regulating m6A methylation. Inhibits pre-mRNA splicing. Also functions as a mRNA export factor by acting as a cofactor for the nuclear export receptor NXF1. The polypeptide is Putative RNA-binding protein 15B (Rbm15b) (Mus musculus (Mouse)).